A 330-amino-acid polypeptide reads, in one-letter code: MIPLLYFVLPTLGSYVMLSIFFLRRPHLLHTPRAPVFPIRLAAHRGGSGERLENTMEAVENSMAQRADLLEFDCQLTRDGVVVVSHDKNLSRQSGLNKDVNTLDFEELPLYKEELEIYFSPGHFAHGSDRHMISLEDVFQKFPRTPMCLEVKERNEELIHKVANLTRRFDRNEITIWAAEKSSVMKRCRAANPEMPMAFTIWRSFWILLLYYLGLLPFVSIPEKFFFCFLPTIINRTYFPFRCGWMNQLSATITKWIIMRKSLIRHLQDRGVQVLFWCLNEESDFEVAFSLGANGVMTDYPTALRHYLDKQEEETQPPQPEALSCLSLKK.

Position 1 (Met1) is a topological domain, cytoplasmic. The helical transmembrane segment at 2 to 22 (IPLLYFVLPTLGSYVMLSIFF) threads the bilayer. The Extracellular portion of the chain corresponds to 23-200 (LRRPHLLHTP…ANPEMPMAFT (178 aa)). The 270-residue stretch at 39-308 (IRLAAHRGGS…DYPTALRHYL (270 aa)) folds into the GP-PDE domain. A divalent metal cation is bound by residues Glu71, Asp73, and His86. A helical transmembrane segment spans residues 201 to 221 (IWRSFWILLLYYLGLLPFVSI). The Cytoplasmic segment spans residues 222 to 330 (PEKFFFCFLP…EALSCLSLKK (109 aa)). A disordered region spans residues 311–330 (QEEETQPPQPEALSCLSLKK).

This sequence belongs to the glycerophosphoryl diester phosphodiesterase family. As to expression, highly expressed in stomach and kidney. In stomach detected in the glandular epithelium. Predominantly expressed in the stomach (at protein level).

The protein localises to the membrane. It localises to the cytoplasm. The protein resides in the perinuclear region. Its subcellular location is the endoplasmic reticulum membrane. It catalyses the reaction 1-hexadecanoyl-sn-glycero-3-phosphocholine + H2O = 1-hexadecanoyl-sn-glycero-3-phosphate + choline + H(+). The catalysed reaction is 1-O-hexadecyl-sn-glycero-3-phosphocholine + H2O = 1-O-hexadecyl-sn-glycero-3-phosphate + choline + H(+). It carries out the reaction 1-O-(1Z-octadecenyl)-sn-glycero-3-phospho-N-hexadecanoyl-ethanolamine + H2O = 1-O-(1Z-octadecenyl)-sn-glycero-3-phosphate + N-hexadecanoylethanolamine + H(+). The enzyme catalyses N-(5Z,8Z,11Z,14Z-eicosatetraenoyl)-1-(9Z-octadecenoyl)-sn-glycero-3-phosphoethanolamine + H2O = N-(5Z,8Z,11Z,14Z-eicosatetraenoyl)-ethanolamine + 1-(9Z-octadecenoyl)-sn-glycero-3-phosphate + H(+). It catalyses the reaction N,1-di-(9Z-octadecenoyl)-sn-glycero-3-phosphoethanolamine + H2O = N-(9Z-octadecenoyl) ethanolamine + 1-(9Z-octadecenoyl)-sn-glycero-3-phosphate + H(+). The catalysed reaction is N-hexadecanoyl-1-(9Z-octadecenoyl)-sn-glycero-3-phosphoethanolamine + H2O = N-hexadecanoylethanolamine + 1-(9Z-octadecenoyl)-sn-glycero-3-phosphate + H(+). It carries out the reaction 1-hexadecanoyl-sn-glycero-3-phosphocholine + H2O = sn-glycerol 3-phosphocholine + hexadecanoate + H(+). With respect to regulation, lysophospholipase D activity is stimulated by calcium. Loss of lysophospholipase D activity in presence of EDTA. Functionally, hydrolyzes lysoglycerophospholipids to produce lysophosphatidic acid (LPA) and the corresponding amines. Shows a preference for 1-O-alkyl-sn-glycero-3-phosphocholine (lyso-PAF), lysophosphatidylcholine (lyso-PC) and N-acylethanolamine lysophospholipids. Does not display glycerophosphodiester phosphodiesterase activity, since it cannot hydrolyze either glycerophosphoinositol or glycerophosphocholine. This Mus musculus (Mouse) protein is Lysophospholipase D GDPD3.